Reading from the N-terminus, the 163-residue chain is C-type lectin lectoxin-Lio2 (163 aa).

Residues 1–21 form the signal peptide; sequence MERFIFAALLVVALSLSGTGA. Disulfide bonds link cysteine 25–cysteine 36, cysteine 53–cysteine 152, and cysteine 127–cysteine 144. Residues 32-153 enclose the C-type lectin domain; that stretch reads SDGYCYKVFK…CRSKRYFICK (122 aa). The Mannose-binding signature appears at 117–119; that stretch reads EPN. Ca(2+)-binding residues include glutamate 125 and aspartate 141.

Belongs to the true venom lectin family. As to expression, expressed by the venom gland.

It localises to the secreted. Mannose-binding lectin which recognizes specific carbohydrate structures and agglutinates a variety of animal cells by binding to cell-surface glycoproteins and glycolipids. May be a calcium-dependent lectin. This Erythrolamprus poecilogyrus (Water snake) protein is C-type lectin lectoxin-Lio2.